A 404-amino-acid polypeptide reads, in one-letter code: Phosphoglycerate kinase (404 aa).

Residues 26-28 (DFN), Arg-41, 64-67 (HLGR), Arg-124, and Arg-161 contribute to the substrate site. ATP-binding positions include Lys-212, Gly-301, Glu-332, and 359-362 (GGDS).

This sequence belongs to the phosphoglycerate kinase family. Monomer.

Its subcellular location is the cytoplasm. It carries out the reaction (2R)-3-phosphoglycerate + ATP = (2R)-3-phospho-glyceroyl phosphate + ADP. The protein operates within carbohydrate degradation; glycolysis; pyruvate from D-glyceraldehyde 3-phosphate: step 2/5. The polypeptide is Phosphoglycerate kinase (Mesomycoplasma hyopneumoniae (strain 232) (Mycoplasma hyopneumoniae)).